Consider the following 104-residue polypeptide: Large ribosomal subunit protein uL23 (104 aa).

This sequence belongs to the universal ribosomal protein uL23 family. As to quaternary structure, part of the 50S ribosomal subunit. Contacts protein L29, and trigger factor when it is bound to the ribosome.

Functionally, one of the early assembly proteins it binds 23S rRNA. One of the proteins that surrounds the polypeptide exit tunnel on the outside of the ribosome. Forms the main docking site for trigger factor binding to the ribosome. In Paraburkholderia phytofirmans (strain DSM 17436 / LMG 22146 / PsJN) (Burkholderia phytofirmans), this protein is Large ribosomal subunit protein uL23.